The following is a 319-amino-acid chain: MAPQRRAATKAPEGNGAAERRNRSSTKKDRAPREVQRLWQRPWLRTAGLGAGFVLTALLLWSSLGADDGVAEVLARRGEVVAGRFIEVPCSEDYDSHRRFEGCTPRKCGRGVTDVVITREEAERIRSVAEKGLSLGGSDGGASILDLHSGALSVGKHFVNLYRYFGDKIQNIFSEEDFRLYREVRQKVQLTIAEAFGISASSLHLTKPTFFSRINSTEARTAHDEYWHAHVDKVTYGSFDYTSLLYLSNYLEDFGGGRFMFMEEGANKTVEPRAGRVSFFTSGSENLHRVEKVHWGTRYAITIAFSCNPDHGIEDPAFP.

The tract at residues 1-34 (MAPQRRAATKAPEGNGAAERRNRSSTKKDRAPRE) is disordered. The Cytoplasmic portion of the chain corresponds to 1–42 (MAPQRRAATKAPEGNGAAERRNRSSTKKDRAPREVQRLWQRP). Basic and acidic residues predominate over residues 18-34 (AERRNRSSTKKDRAPRE). Residues 43–65 (WLRTAGLGAGFVLTALLLWSSLG) form a helical; Signal-anchor for type II membrane protein membrane-spanning segment. The Lumenal segment spans residues 66–319 (ADDGVAEVLA…DHGIEDPAFP (254 aa)). Residues 207-309 (KPTFFSRINS…AITIAFSCNP (103 aa)) enclose the Fe2OG dioxygenase domain. Residue Asn-215 is glycosylated (N-linked (GlcNAc...) asparagine). Residues His-230, Asp-232, and His-288 each coordinate Fe cation. Arg-298 is a catalytic residue. Residue Arg-298 coordinates 2-oxoglutarate.

This sequence belongs to the OGFOD3 family. It depends on Fe(2+) as a cofactor. The cofactor is L-ascorbate.

Its subcellular location is the membrane. This is 2-oxoglutarate and iron-dependent oxygenase domain-containing protein 3 (OGFOD3) from Homo sapiens (Human).